The sequence spans 221 residues: Secreted protein BARF1 (221 aa).

The first 20 residues, 1-20 (MARFIAQLLLLASCVAAGQA), serve as a signal peptide directing secretion. Ig-like domains follow at residues 21-120 (VTAF…EHLS) and 124-220 (PLTL…GYLS). Residue asparagine 95 is glycosylated (N-linked (GlcNAc...) asparagine; by host). The cysteines at positions 146 and 201 are disulfide-linked.

As to quaternary structure, homohexamer. Interacts with human CSF1. Post-translationally, phosphorylated on serine and threonine by host.

It is found in the secreted. Plays diverse functions in immunomodulation and oncogenicity, maybe by acting as a functional receptor for human CSF1. May inhibit interferon secretion from mononuclear cells. Exhibits oncogenic activity in vitro. The sequence is that of Secreted protein BARF1 from Epstein-Barr virus (strain B95-8) (HHV-4).